The following is a 332-amino-acid chain: Glycerol-3-phosphate dehydrogenase [NAD(P)+] (332 aa).

Residues tryptophan 11, arginine 30, and lysine 108 each coordinate NADPH. Lysine 108, glycine 137, and serine 139 together coordinate sn-glycerol 3-phosphate. Alanine 141 contacts NADPH. Sn-glycerol 3-phosphate-binding residues include lysine 192, aspartate 245, serine 255, arginine 256, and asparagine 257. The active-site Proton acceptor is lysine 192. Residue arginine 256 participates in NADPH binding. The NADPH site is built by valine 280 and glutamate 282.

The protein belongs to the NAD-dependent glycerol-3-phosphate dehydrogenase family.

It localises to the cytoplasm. The enzyme catalyses sn-glycerol 3-phosphate + NAD(+) = dihydroxyacetone phosphate + NADH + H(+). It carries out the reaction sn-glycerol 3-phosphate + NADP(+) = dihydroxyacetone phosphate + NADPH + H(+). It functions in the pathway membrane lipid metabolism; glycerophospholipid metabolism. Functionally, catalyzes the reduction of the glycolytic intermediate dihydroxyacetone phosphate (DHAP) to sn-glycerol 3-phosphate (G3P), the key precursor for phospholipid synthesis. The protein is Glycerol-3-phosphate dehydrogenase [NAD(P)+] of Burkholderia vietnamiensis (strain G4 / LMG 22486) (Burkholderia cepacia (strain R1808)).